The following is a 172-amino-acid chain: Endoribonuclease YbeY (172 aa).

Residues 1 to 21 (MTLHVGAEPAPREDDTEDALR) are disordered. A compositionally biased stretch (basic and acidic residues) spans 10 to 21 (APREDDTEDALR). The Zn(2+) site is built by histidine 134, histidine 138, and histidine 144.

Belongs to the endoribonuclease YbeY family. The cofactor is Zn(2+).

Its subcellular location is the cytoplasm. Single strand-specific metallo-endoribonuclease involved in late-stage 70S ribosome quality control and in maturation of the 3' terminus of the 16S rRNA. The polypeptide is Endoribonuclease YbeY (Burkholderia lata (strain ATCC 17760 / DSM 23089 / LMG 22485 / NCIMB 9086 / R18194 / 383)).